Consider the following 208-residue polypeptide: Small ribosomal subunit protein uS4 (208 aa).

The 66-residue stretch at 98–163 (QRLDNVVYRM…NPQITRAIEL (66 aa)) folds into the S4 RNA-binding domain.

This sequence belongs to the universal ribosomal protein uS4 family. In terms of assembly, part of the 30S ribosomal subunit. Contacts protein S5. The interaction surface between S4 and S5 is involved in control of translational fidelity.

In terms of biological role, one of the primary rRNA binding proteins, it binds directly to 16S rRNA where it nucleates assembly of the body of the 30S subunit. With S5 and S12 plays an important role in translational accuracy. The chain is Small ribosomal subunit protein uS4 from Campylobacter jejuni (strain RM1221).